We begin with the raw amino-acid sequence, 219 residues long: Maleylacetoacetate isomerase (219 aa).

The GST N-terminal domain maps to 4–87 (NKTVLYSYWR…YLEETHPENP (84 aa)). Glutathione-binding positions include 14-19 (SSCSWR), Gln45, 71-72 (QS), Gln111, and 115-117 (NLK). The GST C-terminal domain occupies 92–217 (GSYERAIARQ…LPQNQPDAEP (126 aa)).

Belongs to the GST superfamily. Zeta family. The cofactor is glutathione.

It catalyses the reaction 4-maleylacetoacetate = 4-fumarylacetoacetate. Its pathway is amino-acid degradation; L-phenylalanine degradation; acetoacetate and fumarate from L-phenylalanine: step 5/6. The polypeptide is Maleylacetoacetate isomerase (mai) (Dictyostelium discoideum (Social amoeba)).